The following is a 192-amino-acid chain: Xanthine phosphoribosyltransferase (192 aa).

Residues Leu20 and Asn27 each coordinate xanthine. 5-phospho-alpha-D-ribose 1-diphosphate is bound at residue 128–132; the sequence is ANGDA. Lys156 contacts xanthine.

This sequence belongs to the purine/pyrimidine phosphoribosyltransferase family. Xpt subfamily. In terms of assembly, homodimer.

Its subcellular location is the cytoplasm. The catalysed reaction is XMP + diphosphate = xanthine + 5-phospho-alpha-D-ribose 1-diphosphate. Its pathway is purine metabolism; XMP biosynthesis via salvage pathway; XMP from xanthine: step 1/1. Its function is as follows. Converts the preformed base xanthine, a product of nucleic acid breakdown, to xanthosine 5'-monophosphate (XMP), so it can be reused for RNA or DNA synthesis. The sequence is that of Xanthine phosphoribosyltransferase from Staphylococcus aureus (strain bovine RF122 / ET3-1).